The following is a 331-amino-acid chain: Taste receptor type 2 member 38 (331 aa).

The Extracellular segment spans residues 1-17 (MLTLTPVLTVSYEAKIS). The helical transmembrane segment at 18–38 (FLFLSVVEFAVGIMANAFIVL) threads the bilayer. Residues 39–54 (VNFWDMVKKQPLNNCD) lie on the Cytoplasmic side of the membrane. Residues 55 to 75 (IALLCLSITRLFLQGLLLLDA) form a helical membrane-spanning segment. Residues 76–94 (IQLACFQQMKDPLSHNYQA) are Extracellular-facing. Residues 95–115 (ILTLWMSANQVSLWLAACLSL) form a helical membrane-spanning segment. At 116-142 (LYCAKIVRFSHTFPLHLASWVSRRFLQ) the chain is on the cytoplasmic side. Residues 143 to 163 (MLLVALLFSGVCTALCLWDFF) traverse the membrane as a helical segment. Residues 164–198 (SRSHTVVTSMLHMNNTEFNLQIEKLNFFYSFVFCN) are Extracellular-facing. Residue N177 is glycosylated (N-linked (GlcNAc...) asparagine). Residues 199–219 (VGSVPPSLVFLISSGVLVISL) traverse the membrane as a helical segment. Topologically, residues 220-243 (GNHMRTMKSQTRGSRDPSLEAHVR) are cytoplasmic. Residues 244–264 (AIIFLVSFLCFYVVSFCAALI) traverse the membrane as a helical segment. Over 265 to 276 (SIPLLVLWHNKG) the chain is Extracellular. Residues 277–297 (GVMVCIGMMAACPSGHAAILI) form a helical membrane-spanning segment. The Cytoplasmic portion of the chain corresponds to 298 to 331 (SGNAKLKKVIVTILFWFQSRQKVRRVHKVLPRIL).

The protein belongs to the G-protein coupled receptor T2R family. As to expression, expressed in tongue, stomach and duodenum.

It is found in the membrane. Putative taste receptor which may play a role in the perception of bitterness. The polypeptide is Taste receptor type 2 member 38 (Tas2r38) (Rattus norvegicus (Rat)).